A 164-amino-acid chain; its full sequence is Large ribosomal subunit protein bL19 (164 aa).

Residues 144-164 (EAEKQTEVQAEPKIEKSEEKK) are disordered.

It belongs to the bacterial ribosomal protein bL19 family.

Functionally, this protein is located at the 30S-50S ribosomal subunit interface and may play a role in the structure and function of the aminoacyl-tRNA binding site. This is Large ribosomal subunit protein bL19 from Pelagibacter ubique (strain HTCC1062).